Here is a 101-residue protein sequence, read N- to C-terminus: Isochorismate pyruvate lyase (101 aa).

The 91-residue stretch at 4 to 94 (PEDCTGLADI…WYIAEQIKYW (91 aa)) folds into the Chorismate mutase domain. 4 residues coordinate substrate: Arg-14, Arg-31, Lys-42, and Gln-90.

Dimer of dimers.

It catalyses the reaction isochorismate = salicylate + pyruvate. The catalysed reaction is chorismate = prephenate. It participates in siderophore biosynthesis; salicylate biosynthesis. Its activity is regulated as follows. Inhibited by endo-oxabicyclic diacid resembling to the conformation of the transition state. Involved in the incorporation of salicylate into the siderophore pyochelin. Catalyzes the elimination of the enolpyruvyl side chain from isochorismate to yield salicylate and pyruvate via a rare pericyclic hydrogen transfer mechanism from C2 to C5. PchB also catalyzes the nonphysiological Claisen rearrangement of chorismate to prephenate in which the pyruvylenol tail is transferred from a C3 ether linkage to a C1-C9 linkage. This Pseudomonas aeruginosa (strain ATCC 15692 / DSM 22644 / CIP 104116 / JCM 14847 / LMG 12228 / 1C / PRS 101 / PAO1) protein is Isochorismate pyruvate lyase.